We begin with the raw amino-acid sequence, 213 residues long: MGQKVHPYGFRLGYTKNWLSRWFSSKDYPAFVYEDDSIRKYVKEKIFHAGVSKIEIERAGGKIRLIIHTARPGIIIGRKGVEIEKLREDLRRKFNKEFALEVSEIRRPETDAQLVAENIAQQLERRVAFRRAMKRIVGLARKFGAEGIKVACAGRLAGAEIARTEWYRDGRVPLQTLRADIDYGVARANTTYGVIGIKVWIFKGEILDHEVEQ.

Positions 38–106 (IRKYVKEKIF…EFALEVSEIR (69 aa)) constitute a KH type-2 domain.

Belongs to the universal ribosomal protein uS3 family. In terms of assembly, part of the 30S ribosomal subunit. Forms a tight complex with proteins S10 and S14.

Its function is as follows. Binds the lower part of the 30S subunit head. Binds mRNA in the 70S ribosome, positioning it for translation. The polypeptide is Small ribosomal subunit protein uS3 (Maridesulfovibrio salexigens (strain ATCC 14822 / DSM 2638 / NCIMB 8403 / VKM B-1763) (Desulfovibrio salexigens)).